A 101-amino-acid chain; its full sequence is Small ribosomal subunit protein bS18c (101 aa).

Residues 1-19 (MDKSKQPFRKSKRSFRRRL) are compositionally biased toward basic residues. A disordered region spans residues 1–24 (MDKSKQPFRKSKRSFRRRLPPIGS).

It belongs to the bacterial ribosomal protein bS18 family. Part of the 30S ribosomal subunit.

It is found in the plastid. It localises to the chloroplast. The sequence is that of Small ribosomal subunit protein bS18c from Amborella trichopoda.